Here is a 134-residue protein sequence, read N- to C-terminus: Acyl carrier protein, chloroplastic (134 aa).

The transit peptide at 1-51 (MSTTFCSSVSMQATSLAATTRISFQKPALVSRTNLSFNLSRSIPTRLSVSC) directs the protein to the chloroplast. In terms of domain architecture, Carrier spans 55 to 130 (PETVEKVSKI…EAAELIDELV (76 aa)). Ser90 is modified (O-(pantetheine 4'-phosphoryl)serine).

This sequence belongs to the acyl carrier protein (ACP) family. In terms of processing, 4'-phosphopantetheine is transferred from CoA to a specific serine of apo-ACP by acpS. This modification is essential for activity because fatty acids are bound in thioester linkage to the sulfhydryl of the prosthetic group. As to expression, seed.

Its subcellular location is the plastid. The protein resides in the chloroplast. It participates in lipid metabolism; fatty acid biosynthesis. In terms of biological role, carrier of the growing fatty acid chain in fatty acid biosynthesis. This Brassica napus (Rape) protein is Acyl carrier protein, chloroplastic (ACL1.A1).